We begin with the raw amino-acid sequence, 189 residues long: Small ribosomal subunit protein uS5 (189 aa).

The region spanning 22 to 85 (FVDKLVAINR…ESAKRDLIFV (64 aa)) is the S5 DRBM domain.

Belongs to the universal ribosomal protein uS5 family. Part of the 30S ribosomal subunit. Contacts proteins S4 and S8.

Its function is as follows. With S4 and S12 plays an important role in translational accuracy. Located at the back of the 30S subunit body where it stabilizes the conformation of the head with respect to the body. In Agrobacterium fabrum (strain C58 / ATCC 33970) (Agrobacterium tumefaciens (strain C58)), this protein is Small ribosomal subunit protein uS5.